The sequence spans 40 residues: uncharacterized protein (40 aa).

The signal sequence occupies residues Met-1–Phe-27.

This is an uncharacterized protein from Archaeoglobus fulgidus (strain ATCC 49558 / DSM 4304 / JCM 9628 / NBRC 100126 / VC-16).